We begin with the raw amino-acid sequence, 319 residues long: Homeobox protein Hox-B5a (319 aa).

A disordered region spans residues 114-224 (SLLSPGSGDT…NTVGSEGQPP (111 aa)). The segment covering 128–155 (RSSSPRSEQSGSGNLSSTNLSSSTNISS) has biased composition (low complexity). The Antp-type hexapeptide signature appears at 226–231 (IFPWMR). The homeobox DNA-binding region spans 244–303 (GKRARTAYTRYQTLELEKEFHFNRYLTRRRRIEIAHALCLTERQIKIWFQNRRMKWKKDN).

It belongs to the Antp homeobox family.

It is found in the nucleus. In terms of biological role, sequence-specific transcription factor which is part of a developmental regulatory system that provides cells with specific positional identities on the anterior-posterior axis. The protein is Homeobox protein Hox-B5a (hoxb5a) of Takifugu rubripes (Japanese pufferfish).